Here is a 210-residue protein sequence, read N- to C-terminus: Na(+)-translocating NADH-quinone reductase subunit D (210 aa).

Transmembrane regions (helical) follow at residues 9–29 (AVLF…LGIC), 42–62 (LIMS…ISTI), 72–92 (IIVQ…VLQA), 96–116 (ATAK…IVMG), 131–151 (FLDG…VGFI), and 178–198 (MGLL…IWVL).

The protein belongs to the NqrDE/RnfAE family. As to quaternary structure, composed of six subunits; NqrA, NqrB, NqrC, NqrD, NqrE and NqrF.

It is found in the cell inner membrane. It carries out the reaction a ubiquinone + n Na(+)(in) + NADH + H(+) = a ubiquinol + n Na(+)(out) + NAD(+). Its function is as follows. NQR complex catalyzes the reduction of ubiquinone-1 to ubiquinol by two successive reactions, coupled with the transport of Na(+) ions from the cytoplasm to the periplasm. NqrA to NqrE are probably involved in the second step, the conversion of ubisemiquinone to ubiquinol. This chain is Na(+)-translocating NADH-quinone reductase subunit D, found in Pseudoalteromonas translucida (strain TAC 125).